The sequence spans 567 residues: NAC domain-containing protein 78 (567 aa).

Residues 9–159 (LAPGFRFHPT…AYVLCRIFQK (151 aa)) enclose the NAC domain. The DNA-binding element occupies 108–165 (VGMKKTLVYHKGRAPRGERTNWVMHEYRLSDEDLKKAGVPQEAYVLCRIFQKSGTGPK). The segment at 393–436 (NQEALDQKPAPKELEKEVAGGKEAVEEKESGEGSSSKQDTDFKD) is disordered. Over residues 397–423 (LDQKPAPKELEKEVAGGKEAVEEKESG) the composition is skewed to basic and acidic residues. A helical transmembrane segment spans residues 544 to 564 (LVFMCLWVLLLSVSFKIVTMV).

In terms of tissue distribution, expressed in root meristem. Expressed in roots, rosette leaves, cauline leaves, shoot apex, stems and flowers.

It is found in the membrane. The protein resides in the nucleus. Transcriptional activator activated by proteolytic cleavage through regulated intramembrane proteolysis (RIP). Transcripition activator associated with the induction of genes related to flavonoid biosynthesis and required for the accumulation of anthocyanins in response to high light stress. Plays a role in the regulation of 20S and 26S proteasomes in response to high light stress. The sequence is that of NAC domain-containing protein 78 (NAC078) from Arabidopsis thaliana (Mouse-ear cress).